We begin with the raw amino-acid sequence, 211 residues long: Imidazole glycerol phosphate synthase subunit HisH (211 aa).

The 206-residue stretch at 1–206 (MIGIIDYGRG…GKWVNEDATV (206 aa)) folds into the Glutamine amidotransferase type-1 domain. Residue Cys-79 is the Nucleophile of the active site. Active-site residues include His-181 and Glu-183.

Heterodimer of HisH and HisF.

The protein resides in the cytoplasm. The enzyme catalyses 5-[(5-phospho-1-deoxy-D-ribulos-1-ylimino)methylamino]-1-(5-phospho-beta-D-ribosyl)imidazole-4-carboxamide + L-glutamine = D-erythro-1-(imidazol-4-yl)glycerol 3-phosphate + 5-amino-1-(5-phospho-beta-D-ribosyl)imidazole-4-carboxamide + L-glutamate + H(+). It catalyses the reaction L-glutamine + H2O = L-glutamate + NH4(+). Its pathway is amino-acid biosynthesis; L-histidine biosynthesis; L-histidine from 5-phospho-alpha-D-ribose 1-diphosphate: step 5/9. Functionally, IGPS catalyzes the conversion of PRFAR and glutamine to IGP, AICAR and glutamate. The HisH subunit catalyzes the hydrolysis of glutamine to glutamate and ammonia as part of the synthesis of IGP and AICAR. The resulting ammonia molecule is channeled to the active site of HisF. The chain is Imidazole glycerol phosphate synthase subunit HisH from Desulfitobacterium hafniense (strain DSM 10664 / DCB-2).